Reading from the N-terminus, the 108-residue chain is uncharacterized protein (108 aa).

Positions 81 to 108 are disordered; the sequence is TNHHQQQQNHQNQQQQQQQPNGIFENNI. The segment covering 83 to 99 has biased composition (low complexity); it reads HHQQQQNHQNQQQQQQQ.

This is an uncharacterized protein from Dictyostelium discoideum (Social amoeba).